Consider the following 100-residue polypeptide: Large ribosomal subunit protein uL23 (100 aa).

Belongs to the universal ribosomal protein uL23 family. In terms of assembly, part of the 50S ribosomal subunit. Contacts protein L29, and trigger factor when it is bound to the ribosome.

One of the early assembly proteins it binds 23S rRNA. One of the proteins that surrounds the polypeptide exit tunnel on the outside of the ribosome. Forms the main docking site for trigger factor binding to the ribosome. In Pectobacterium atrosepticum (strain SCRI 1043 / ATCC BAA-672) (Erwinia carotovora subsp. atroseptica), this protein is Large ribosomal subunit protein uL23.